The chain runs to 177 residues: MSRVGKNPVSVPANVEVRLSGSEVEVKGPLGMLRHELVSDISIERKGESLLVKAADDSKHANAMWGTTRALLANMVKGVTTGFEKRLILVGVGYRAQAADNVLNLTLGFSHPIAHKMPEGIKVETPSQTEVVIKGMDKQQVGQVAADVRAYREPEPYKGKGVRYADEVIVLKETKKK.

It belongs to the universal ribosomal protein uL6 family. In terms of assembly, part of the 50S ribosomal subunit.

In terms of biological role, this protein binds to the 23S rRNA, and is important in its secondary structure. It is located near the subunit interface in the base of the L7/L12 stalk, and near the tRNA binding site of the peptidyltransferase center. This is Large ribosomal subunit protein uL6 from Nitrosospira multiformis (strain ATCC 25196 / NCIMB 11849 / C 71).